The primary structure comprises 525 residues: Protein translocase subunit SecD (525 aa).

A run of 6 helical transmembrane segments spans residues 9 to 29, 368 to 388, 392 to 412, 415 to 435, 460 to 480, and 487 to 507; these read LYLV…SLLG, VLIG…GFGM, LAVV…QATL, PGIA…VLIF, FSTI…LYQF, and GFAV…IFVT.

It belongs to the SecD/SecF family. SecD subfamily. As to quaternary structure, forms a complex with SecF. Part of the essential Sec protein translocation apparatus which comprises SecA, SecYEG and auxiliary proteins SecDF-YajC and YidC.

The protein localises to the cell inner membrane. Its function is as follows. Part of the Sec protein translocase complex. Interacts with the SecYEG preprotein conducting channel. SecDF uses the proton motive force (PMF) to complete protein translocation after the ATP-dependent function of SecA. The protein is Protein translocase subunit SecD of Magnetococcus marinus (strain ATCC BAA-1437 / JCM 17883 / MC-1).